A 91-amino-acid polypeptide reads, in one-letter code: Transcriptional repressor FrmR (91 aa).

It belongs to the FrmR/RcnR family. In terms of assembly, homotetramer.

The protein localises to the cytoplasm. Functionally, formaldehyde sensor. In the absence of formaldehyde, mediates repression of the frmRAB operon. Acts by binding directly to the frmRAB promoter region. In the presence of formaldehyde, it dissociates from the frmRAB promoter region and allows expression of the formaldehyde detoxification system encoded by frmA and frmB. This Escherichia coli (strain UTI89 / UPEC) protein is Transcriptional repressor FrmR.